The chain runs to 567 residues: Urease subunit alpha (567 aa).

In terms of domain architecture, Urease spans 129 to 567 (GGIDTHIHFI…LPMAQRYFLF (439 aa)). Residues H134, H136, and K217 each coordinate Ni(2+). K217 carries the post-translational modification N6-carboxylysine. A substrate-binding site is contributed by H219. The Ni(2+) site is built by H246 and H272. H320 functions as the Proton donor in the catalytic mechanism. D360 provides a ligand contact to Ni(2+).

Belongs to the metallo-dependent hydrolases superfamily. Urease alpha subunit family. As to quaternary structure, heterotrimer of UreA (gamma), UreB (beta) and UreC (alpha) subunits. Three heterotrimers associate to form the active enzyme. The cofactor is Ni cation. Carboxylation allows a single lysine to coordinate two nickel ions.

The protein resides in the cytoplasm. It carries out the reaction urea + 2 H2O + H(+) = hydrogencarbonate + 2 NH4(+). It functions in the pathway nitrogen metabolism; urea degradation; CO(2) and NH(3) from urea (urease route): step 1/1. The sequence is that of Urease subunit alpha from Delftia acidovorans (strain DSM 14801 / SPH-1).